The primary structure comprises 430 residues: MTRSEALFEQAKKTIPGGVNSPVRAFNGVGGSPLFIEKANGAYIYDADGKAYIDYVGSWGPMILGHNHPKIRAAVLAAVENGLSFGAPTELEVQMAEKVISMVPSIEQVRMVSSGTEATMSAIRLARGFTNRDKILKFEGCYHGHADCLLVKAGSGALTLGQPSSPGIPEDFAKHTLTAVYNDLDSVRTLFEQYPTEISCIIIEPVAGNMNCIPPIPGFLQGLRDICDEFGALMIIDEVMTGFRVSQSGAQGYYGVTPDLTTLGKVIGGGMPVGAFGGRKDVMQFIAPTGPVYQAGTLSGNPIAMSAGLAQMEALCEEGLYEELSAKTKRIAEGFKAAADKHGIPMAINYVGGMFGFFFTEQPEITRFDQVTQCNIEQFRIFYHGMLDEGVYLAPSAYEAGFLSMAHGEEEMRLTLEAADRVLASMKAAS.

Lys265 carries the N6-(pyridoxal phosphate)lysine modification.

Belongs to the class-III pyridoxal-phosphate-dependent aminotransferase family. HemL subfamily. Homodimer. Pyridoxal 5'-phosphate serves as cofactor.

It is found in the cytoplasm. The enzyme catalyses (S)-4-amino-5-oxopentanoate = 5-aminolevulinate. It participates in porphyrin-containing compound metabolism; protoporphyrin-IX biosynthesis; 5-aminolevulinate from L-glutamyl-tRNA(Glu): step 2/2. This is Glutamate-1-semialdehyde 2,1-aminomutase from Shewanella baltica (strain OS195).